The chain runs to 96 residues: Exodeoxyribonuclease 7 small subunit (96 aa).

The span at 61 to 79 (ALTKDESQKTNKTGFRTES) shows a compositional bias: basic and acidic residues. Positions 61 to 96 (ALTKDESQKTNKTGFRTESKSTSQTSSDSVLEEDLF) are disordered. The span at 80–89 (KSTSQTSSDS) shows a compositional bias: low complexity.

This sequence belongs to the XseB family. As to quaternary structure, heterooligomer composed of large and small subunits.

The protein resides in the cytoplasm. The catalysed reaction is Exonucleolytic cleavage in either 5'- to 3'- or 3'- to 5'-direction to yield nucleoside 5'-phosphates.. Bidirectionally degrades single-stranded DNA into large acid-insoluble oligonucleotides, which are then degraded further into small acid-soluble oligonucleotides. This chain is Exodeoxyribonuclease 7 small subunit, found in Leptospira borgpetersenii serovar Hardjo-bovis (strain JB197).